The chain runs to 674 residues: Kinesin-like protein KIFC1 (674 aa).

Residues S28, S33, and S35 each carry the phosphoserine modification. The disordered stretch occupies residues 66–96 (TSRPRGPLLSTVSQTQGHTAAQKGPKKTGPR). Over residues 75–84 (STVSQTQGHT) the composition is skewed to polar residues. A coiled-coil region spans residues 146–315 (DLNEELKRYR…QELKGNIRVF (170 aa)). The Kinesin motor domain maps to 311–664 (NIRVFCRVRP…LRFASKVNQC (354 aa)). The disordered stretch occupies residues 327–366 (TPSPGFLVFPPGPAGPSDPPTGLSLSRSDDRRSTLTGAPA). Residues 336–345 (PPGPAGPSDP) show a composition bias toward pro residues. Residue T360 is modified to Phosphothreonine. 411 to 418 (GQTGSGKT) lines the ATP pocket.

The protein belongs to the TRAFAC class myosin-kinesin ATPase superfamily. Kinesin family. NCD subfamily. As to quaternary structure, binds NUBP1 and NUBP2. Interacts with PPP1R42. In terms of tissue distribution, highly expressed in 14 dpc embryos, spleen and NIH3T3 cells. Also expressed in testis, brain, lung, kidney and cultured astrocytes. Very low levels in skeletal muscle and heart.

The protein resides in the nucleus. The protein localises to the cytoplasm. Its subcellular location is the cytoskeleton. It is found in the microtubule organizing center. It localises to the centrosome. The protein resides in the spindle. The protein localises to the early endosome. Functionally, minus end-directed microtubule-dependent motor required for bipolar spindle formation. May contribute to movement of early endocytic vesicles. Regulates cilium formation and structure. This chain is Kinesin-like protein KIFC1, found in Mus musculus (Mouse).